The chain runs to 337 residues: Hsp90 co-chaperone Cdc37-like 1 (337 aa).

The segment covering 1 to 11 has biased composition (pro residues); the sequence is MEQPWPPPGPW. The disordered stretch occupies residues 1–43; it reads MEQPWPPPGPWSLPRAEGEAEEESDLDLSPGSPRCPQLPGGGT. Residues 2 to 171 form a self-association region; sequence EQPWPPPGPW…HEQKIRHFGM (170 aa). A phosphoserine mark is found at Ser32 and Ser88. Residues 84 to 122 are a coiled coil; that stretch reads HNSESLDQEHAKAQTAISELRQREEEWRQKEEALVQRER. Residues 147–277 are self-association and interaction with Hsp90; that stretch reads KETEDEDKSK…SRVRLYSQSP (131 aa). The segment at 267 to 337 is interaction with Hsp70; the sequence is KSRVRLYSQS…DDEPKMMDTV (71 aa). The interval 278-337 is required for interaction with STIP1; the sequence is NFQPVTVQNHVPHSGVGSIGLLESLPQNPDYLQYSINTALCSLNSVVHKEDDEPKMMDTV.

Belongs to the CDC37 family. In terms of assembly, self-associates. Forms complexes with Hsp70 and Hsp90. Interacts with CDC37, FKBP4, PPID and STIP1.

It is found in the cytoplasm. Functionally, co-chaperone that binds to numerous proteins and promotes their interaction with Hsp70 and Hsp90. The chain is Hsp90 co-chaperone Cdc37-like 1 (CDC37L1) from Bos taurus (Bovine).